The chain runs to 334 residues: Protein CapI (334 aa).

Serine 126 lines the substrate pocket. Tyrosine 151 serves as the catalytic Proton acceptor.

It belongs to the NAD(P)-dependent epimerase/dehydratase family.

It participates in capsule biogenesis; capsule polysaccharide biosynthesis. Functionally, required for the biosynthesis of type 1 capsular polysaccharide. This chain is Protein CapI (capI), found in Staphylococcus aureus.